The chain runs to 495 residues: L-2,4-diaminobutyrate decarboxylase (495 aa).

Residue Lys312 is modified to N6-(pyridoxal phosphate)lysine.

It belongs to the group II decarboxylase family. Pyridoxal 5'-phosphate is required as a cofactor.

The catalysed reaction is L-2,4-diaminobutanoate + H(+) = propane-1,3-diamine + CO2. Its pathway is siderophore biosynthesis; rhizobactin biosynthesis. This chain is L-2,4-diaminobutyrate decarboxylase (rhbB), found in Rhizobium meliloti (strain 1021) (Ensifer meliloti).